Reading from the N-terminus, the 101-residue chain is Large ribosomal subunit protein uL24 (101 aa).

The protein belongs to the universal ribosomal protein uL24 family. As to quaternary structure, part of the 50S ribosomal subunit.

Functionally, one of two assembly initiator proteins, it binds directly to the 5'-end of the 23S rRNA, where it nucleates assembly of the 50S subunit. One of the proteins that surrounds the polypeptide exit tunnel on the outside of the subunit. This Cereibacter sphaeroides (strain ATCC 17025 / ATH 2.4.3) (Rhodobacter sphaeroides) protein is Large ribosomal subunit protein uL24.